We begin with the raw amino-acid sequence, 379 residues long: Cytochrome b (379 aa).

4 consecutive transmembrane segments (helical) span residues 33 to 53 (FGSL…FLAM), 77 to 98 (WLIR…FIHV), 113 to 133 (WNIG…GYVL), and 178 to 198 (FFAF…VHLL). Positions 83 and 97 each coordinate heme b. Residues His182 and His196 each coordinate heme b. His201 contacts a ubiquinone. The next 4 helical transmembrane spans lie at 226–246 (IKDL…ALFF), 288–308 (LGGV…PLLN), 320–340 (ITQT…WIGG), and 347–367 (FTMI…ILMP).

It belongs to the cytochrome b family. As to quaternary structure, the cytochrome bc1 complex contains 11 subunits: 3 respiratory subunits (MT-CYB, CYC1 and UQCRFS1), 2 core proteins (UQCRC1 and UQCRC2) and 6 low-molecular weight proteins (UQCRH/QCR6, UQCRB/QCR7, UQCRQ/QCR8, UQCR10/QCR9, UQCR11/QCR10 and a cleavage product of UQCRFS1). This cytochrome bc1 complex then forms a dimer. Heme b serves as cofactor.

The protein localises to the mitochondrion inner membrane. Functionally, component of the ubiquinol-cytochrome c reductase complex (complex III or cytochrome b-c1 complex) that is part of the mitochondrial respiratory chain. The b-c1 complex mediates electron transfer from ubiquinol to cytochrome c. Contributes to the generation of a proton gradient across the mitochondrial membrane that is then used for ATP synthesis. The polypeptide is Cytochrome b (MT-CYB) (Akodon dolores (Dolorous grass mouse)).